The following is a 97-amino-acid chain: Gibberellin-regulated protein 5 (97 aa).

The N-terminal stretch at 1 to 27 is a signal peptide; the sequence is MANCIRRNALFFLTLLFLLSVSNLVQA.

The protein belongs to the GASA family. Six disulfide bonds may be present. As to expression, expressed in roots, root hairs, vasculature of cotyledons and hypocotyls, shoot apex, leaf veins, stems, flower receptacles, pollen, filaments, anthers and siliques.

The protein resides in the secreted. Its subcellular location is the cell wall. It is found in the extracellular space. It localises to the extracellular matrix. Functionally, gibberellin-regulated protein that acts as a negative regulator of gibberellin-induced flowering and stem growth. May inhibit flowering and inflorescence growth via a pathway involving GAI and by enhancing FLC expression and repressing FT and LFY. Acts as a negative regulator in thermotolerance by resogulating both salicylic acid (SA) signaling and heat shock-protein accumulation. This chain is Gibberellin-regulated protein 5 (GASA5), found in Arabidopsis thaliana (Mouse-ear cress).